Reading from the N-terminus, the 648-residue chain is Bifunctional protein TilS/HprT (648 aa).

29–34 (SGGPDS) lines the ATP pocket. Asp-627 is a binding site for Mg(2+).

In the N-terminal section; belongs to the tRNA(Ile)-lysidine synthase family. It in the C-terminal section; belongs to the purine/pyrimidine phosphoribosyltransferase family. It depends on Mg(2+) as a cofactor.

The protein localises to the cytoplasm. It carries out the reaction IMP + diphosphate = hypoxanthine + 5-phospho-alpha-D-ribose 1-diphosphate. The enzyme catalyses GMP + diphosphate = guanine + 5-phospho-alpha-D-ribose 1-diphosphate. It catalyses the reaction cytidine(34) in tRNA(Ile2) + L-lysine + ATP = lysidine(34) in tRNA(Ile2) + AMP + diphosphate + H(+). Ligates lysine onto the cytidine present at position 34 of the AUA codon-specific tRNA(Ile) that contains the anticodon CAU, in an ATP-dependent manner. Cytidine is converted to lysidine, thus changing the amino acid specificity of the tRNA from methionine to isoleucine. This chain is Bifunctional protein TilS/HprT (tilS/hprT), found in Listeria monocytogenes serovar 1/2a (strain ATCC BAA-679 / EGD-e).